A 1470-amino-acid chain; its full sequence is Histone acetyltransferase HAC4 (1470 aa).

A compositionally biased stretch (polar residues) spans 1 to 10 (MNNNKEVPQN). Disordered regions lie at residues 1–20 (MNNN…SSSA) and 342–376 (TNFQ…HSQN). The segment covering 11 to 20 (SVAVSSSSSA) has biased composition (low complexity). Over residues 342–365 (TNFQSAPNNRDNLPQVSQQLSNHG) the composition is skewed to polar residues. A TAZ-type 1 zinc finger spans residues 416-495 (GQTSSNTVLR…SISCRTCVAV (80 aa)). The interval 518-566 (SSKCQPKKSSKSRQAYKKGGAEAPSVDADLQRSIKRPKLHRPSQNITPE) is disordered. Residues 522-533 (QPKKSSKSRQAY) are compositionally biased toward basic residues. The PHD-type zinc-finger motif lies at 764-841 (HYVCAPCYNE…KYTCPSCYIQ (78 aa)). The CBP/p300-type HAT domain maps to 856–1293 (VPGATSLPVT…ILYHLHNPTA (438 aa)). Acetyl-CoA-binding positions include 979–981 (LDS), 998–999 (RT), and Trp-1054. 2 consecutive ZZ-type zinc fingers follow at residues 1175–1238 (HLQH…IKDV) and 1295–1347 (AFAT…SSTD). Residues Cys-1180, Cys-1183, Cys-1195, Cys-1198, Cys-1204, Cys-1207, His-1220, His-1228, Cys-1300, Cys-1303, Cys-1315, Cys-1318, Cys-1324, Cys-1327, His-1335, and His-1337 each contribute to the Zn(2+) site. The TAZ-type 2 zinc-finger motif lies at 1358–1436 (SQSYQVKLEK…KCTVPKCSGL (79 aa)).

As to expression, rosette leaves, stems and flowers.

It localises to the nucleus. The enzyme catalyses L-lysyl-[protein] + acetyl-CoA = N(6)-acetyl-L-lysyl-[protein] + CoA + H(+). Its function is as follows. Acetyltransferase enzyme. Acetylates histones, giving a specific tag for transcriptional activation. This is Histone acetyltransferase HAC4 (HAC4) from Arabidopsis thaliana (Mouse-ear cress).